A 75-amino-acid polypeptide reads, in one-letter code: Kappa-conotoxin RIIIK (75 aa).

A signal peptide spans 1–19; sequence MSKLGVLLTICLLLFPLTA. Positions 20 to 50 are excised as a propeptide; the sequence is LPMDGDQPVDRLAERMQDNISSEQHTFFEKR. 4 positions are modified to 4-hydroxyproline: proline 52, proline 63, proline 65, and proline 71. Cystine bridges form between cysteine 54/cysteine 67, cysteine 55/cysteine 72, and cysteine 62/cysteine 73. Residue threonine 74 is modified to Threonine amide.

This sequence belongs to the conotoxin M superfamily. As to expression, expressed by the venom duct.

It localises to the secreted. Kappa-conotoxins inhibits voltage-gated potassium channels (Kv). This synthetic toxin reversibly inhibits the insect potassium channel Shaker K+, the teleost homolog TSha1 and the mammalian Kv1.2/KCNA2 channel. Interacts with the pore region of the insect channel, in a state-dependent manner. Causes seizure when intracerebrovascularly injected into mice. Is also toxic when intrathecally injected into mice, but shows no visible effects by intraperitoneal injection. Shows protective effects on cardiac tissue when administered after an ischemic event. The polypeptide is Kappa-conotoxin RIIIK (Conus radiatus (Rayed cone)).